The sequence spans 181 residues: ECF RNA polymerase sigma factor RpoE (181 aa).

The tract at residues 29 to 96 is sigma-70 factor domain-2; it reads LFQHFAPKVK…RRIDGLRKDR (68 aa). The short motif at 53–56 is the Interaction with polymerase core subunit RpoC element; the sequence is ECAQ. Positions 129 to 178 are sigma-70 factor domain-4; the sequence is AIARLPEAQRALIERAFFGDLTHRELAAETGLPLGTIKSRIRLALDRLRQ. Positions 151–170 form a DNA-binding region, H-T-H motif; the sequence is HRELAAETGLPLGTIKSRIR.

It belongs to the sigma-70 factor family. ECF subfamily. As to quaternary structure, interacts transiently with the RNA polymerase catalytic core formed by RpoA, RpoB, RpoC and RpoZ (2 alpha, 1 beta, 1 beta' and 1 omega subunit) to form the RNA polymerase holoenzyme that can initiate transcription. Forms a 1:1 complex (via sigma-70 factor domain 4) with anti-sigma factor ChrR; this inhibits the interaction of RpoE with the RNA polymerase catalytic core.

Sigma factors are initiation factors that promote the attachment of RNA polymerase to specific initiation sites and are then released. Extracytoplasmic function (ECF) sigma factors are held in an inactive form by a cognate anti-sigma factor until released. Sigma-E controls a transcriptional response to singlet oxygen, a by-product of photosynthesis; its continuous activity requires constant exposure to singlet oxygen. The regulon has about 180 genes that protect against or repair damage induced by singlet oxygen, including itself and rpoH2, a heat shock-responsive sigma factor. The chain is ECF RNA polymerase sigma factor RpoE (rpoE) from Cereibacter sphaeroides (strain ATCC 17023 / DSM 158 / JCM 6121 / CCUG 31486 / LMG 2827 / NBRC 12203 / NCIMB 8253 / ATH 2.4.1.) (Rhodobacter sphaeroides).